The primary structure comprises 331 residues: Tryptophan--tRNA ligase (331 aa).

ATP is bound by residues 10 to 12 (QPS) and 18 to 19 (GN). The short motif at 11 to 19 (PSGQLTLGN) is the 'HIGH' region element. D133 is an L-tryptophan binding site. Residues 145 to 147 (GED), V184, and 193 to 197 (KMSKS) each bind ATP. Residues 193–197 (KMSKS) carry the 'KMSKS' region motif.

The protein belongs to the class-I aminoacyl-tRNA synthetase family. Homodimer.

Its subcellular location is the cytoplasm. The catalysed reaction is tRNA(Trp) + L-tryptophan + ATP = L-tryptophyl-tRNA(Trp) + AMP + diphosphate + H(+). Its function is as follows. Catalyzes the attachment of tryptophan to tRNA(Trp). This is Tryptophan--tRNA ligase from Listeria monocytogenes serotype 4b (strain F2365).